The primary structure comprises 625 residues: Keratin, type II cytoskeletal 1 (625 aa).

A compositionally biased stretch (low complexity) spans methionine 1 to arginine 12. Positions methionine 1 to alanine 27 are disordered. Positions methionine 1–glutamine 178 are head. Arginine 12 bears the Omega-N-methylarginine mark. Phosphoserine is present on residues serine 23 and serine 26. Arginine 51 is subject to Omega-N-methylarginine. At serine 69 the chain carries Phosphoserine. A coiled-coil region spans residues glutamine 171–glutamine 319. The segment at glutamate 179–leucine 214 is coil 1A. The 314-residue stretch at glutamate 179–methionine 492 folds into the IF rod domain. Positions glutamine 215–tyrosine 233 are linker 1. Residues isoleucine 234–methionine 325 are coil 1B. Lysine 275 is modified (N6,N6-dimethyllysine). The segment at glutamine 326–isoleucine 349 is linker 12. The coil 2 stretch occupies residues isoleucine 350–glutamate 488. A coiled-coil region spans residues aspartate 388–aspartate 475. Residues glutamate 489–asparagine 625 are tail. Disordered regions lie at residues cysteine 496–glycine 525 and serine 560–asparagine 625. Low complexity predominate over residues valine 500–serine 515. Composition is skewed to gly residues over residues serine 516–glycine 525 and serine 560–lysine 606. Omega-N-methylarginine occurs at positions 517, 574, and 596. The span at valine 613–asparagine 625 shows a compositional bias: polar residues.

The protein belongs to the intermediate filament family. As to quaternary structure, heterotetramer of two type I and two type II keratins. Heterodimer with KRT10. Two heterodimers of KRT1 and KRT10 form a heterotetramer. Forms a heterodimer with KRT14; the interaction is more abundant in the absence of KRT5. Interacts with ITGB1 in the presence of RACK1 and SRC, and with RACK1. Interacts with C1QBP; the association represents a cell surface kininogen receptor. Interacts with EPPK1; interaction is dependent of higher-order structure of intermediate filament. Undergoes deimination of some arginine residues (citrullination).

Its subcellular location is the cell membrane. It is found in the cytoplasm. May regulate the activity of kinases such as PKC and SRC via binding to integrin beta-1 (ITB1) and the receptor of activated protein C kinase 1 (RACK1). In complex with C1QBP is a high affinity receptor for kininogen-1/HMWK. The polypeptide is Keratin, type II cytoskeletal 1 (Rattus norvegicus (Rat)).